The chain runs to 189 residues: Flavin prenyltransferase UbiX (189 aa).

Residues 10 to 12, serine 37, 88 to 91, and arginine 123 contribute to the FMN site; these read GAS and SIKT. Residues tyrosine 153 and arginine 169 each coordinate dimethylallyl phosphate.

The protein belongs to the UbiX/PAD1 family.

It catalyses the reaction dimethylallyl phosphate + FMNH2 = prenylated FMNH2 + phosphate. It participates in cofactor biosynthesis; ubiquinone biosynthesis. Functionally, flavin prenyltransferase that catalyzes the synthesis of the prenylated FMN cofactor (prenyl-FMN) for 4-hydroxy-3-polyprenylbenzoic acid decarboxylase UbiD. The prenyltransferase is metal-independent and links a dimethylallyl moiety from dimethylallyl monophosphate (DMAP) to the flavin N5 and C6 atoms of FMN. In Escherichia coli O157:H7, this protein is Flavin prenyltransferase UbiX.